The primary structure comprises 203 residues: MNPEYDYLFKLLLIGDSGVGKSCLLLRFADDSYLDSYISTIGVDFKIRTVEQDGKTIKLQIWDTAGQERFRTITSSYYRGAHGIIIVYDVTDQESFNNVKQWLNEIDRYASDNVNKLLVGNKSDLTANKVVATETAKAFADEMGIPFMETSAKNATNVQQAFMAMAASIKDRMASQPAAANARPATVQIRGQPVNQKTSCCSS.

GTP is bound by residues glycine 15–cysteine 23, tyrosine 33–threonine 40, aspartate 63–glutamine 67, asparagine 121–aspartate 124, and serine 151–lysine 153. The Effector region signature appears at tyrosine 37 to phenylalanine 45. Residues cysteine 200 and cysteine 201 are each lipidated (S-geranylgeranyl cysteine).

It belongs to the small GTPase superfamily. Rab family. In terms of tissue distribution, its expression is weak in stems, higher in roots, leaves and coleoptiles, but highest in flowers.

The protein resides in the cell membrane. Its function is as follows. Protein transport. Probably involved in vesicular traffic. The sequence is that of GTP-binding protein YPTM2 (YPTM2) from Zea mays (Maize).